A 465-amino-acid polypeptide reads, in one-letter code: Soluble pyridine nucleotide transhydrogenase (465 aa).

Residue 36-45 coordinates FAD; sequence ERYNNVGGGC.

Belongs to the class-I pyridine nucleotide-disulfide oxidoreductase family. FAD serves as cofactor.

It localises to the cytoplasm. It catalyses the reaction NAD(+) + NADPH = NADH + NADP(+). Its function is as follows. Conversion of NADPH, generated by peripheral catabolic pathways, to NADH, which can enter the respiratory chain for energy generation. The polypeptide is Soluble pyridine nucleotide transhydrogenase (Serratia proteamaculans (strain 568)).